A 256-amino-acid chain; its full sequence is Ubiquinone/menaquinone biosynthesis C-methyltransferase UbiE (256 aa).

The segment covering 1 to 12 has biased composition (basic and acidic residues); sequence MNDQRKGEHAEP. Residues 1-21 are disordered; it reads MNDQRKGEHAEPTTHFGYQDV. S-adenosyl-L-methionine is bound by residues threonine 79, aspartate 100, and 128 to 129; that span reads DA.

Belongs to the class I-like SAM-binding methyltransferase superfamily. MenG/UbiE family.

The catalysed reaction is a 2-demethylmenaquinol + S-adenosyl-L-methionine = a menaquinol + S-adenosyl-L-homocysteine + H(+). The enzyme catalyses a 2-methoxy-6-(all-trans-polyprenyl)benzene-1,4-diol + S-adenosyl-L-methionine = a 5-methoxy-2-methyl-3-(all-trans-polyprenyl)benzene-1,4-diol + S-adenosyl-L-homocysteine + H(+). It functions in the pathway quinol/quinone metabolism; menaquinone biosynthesis; menaquinol from 1,4-dihydroxy-2-naphthoate: step 2/2. Its pathway is cofactor biosynthesis; ubiquinone biosynthesis. In terms of biological role, methyltransferase required for the conversion of demethylmenaquinol (DMKH2) to menaquinol (MKH2) and the conversion of 2-polyprenyl-6-methoxy-1,4-benzoquinol (DDMQH2) to 2-polyprenyl-3-methyl-6-methoxy-1,4-benzoquinol (DMQH2). This Pseudomonas putida (strain W619) protein is Ubiquinone/menaquinone biosynthesis C-methyltransferase UbiE.